Consider the following 465-residue polypeptide: Chaperone protein dnaJ C76, chloroplastic (465 aa).

The N-terminal 38 residues, 1–38 (MTPAIFSPTTLPPSTATWPCSTSQKLITVRSPLKFKCR), are a transit peptide targeting the chloroplast. The J domain maps to 50–113 (DLYDLLGIDR…ISRQAYDKEQ (64 aa)). The segment at 346–385 (AALPSSGNNNGSKASSNPQVTRKTFPSEEKPTSRRENRRQ) is disordered. Positions 350–362 (SSGNNNGSKASSN) are enriched in low complexity. Over residues 370–384 (FPSEEKPTSRRENRR) the composition is skewed to basic and acidic residues.

Belongs to the DnaJ family. In terms of tissue distribution, expressed in roots, exclusively in the stele.

The protein localises to the plastid. It is found in the chloroplast. In terms of biological role, may function together with HSC70 chaperone to assist protein folding and prevent protein aggregation during salt stress in the chloroplast. Involved in root development. Required for the position-dependent cell fate determination during root hair development. The protein is Chaperone protein dnaJ C76, chloroplastic of Arabidopsis thaliana (Mouse-ear cress).